Consider the following 382-residue polypeptide: Type 2 DNA topoisomerase 6 subunit A (382 aa).

In terms of domain architecture, Topo IIA-type catalytic spans 14–155 (YDPQKVLKKL…MHITADRRGY (142 aa)). Catalysis depends on Tyr108, which acts as the O-(5'-phospho-DNA)-tyrosine intermediate. Mg(2+) is bound by residues Glu202 and Asp254.

It belongs to the TOP6A family. Homodimer. Heterotetramer of two Top6A and two Top6B chains. The cofactor is Mg(2+).

It catalyses the reaction ATP-dependent breakage, passage and rejoining of double-stranded DNA.. In terms of biological role, relaxes both positive and negative superturns and exhibits a strong decatenase activity. The protein is Type 2 DNA topoisomerase 6 subunit A of Pyrococcus abyssi (strain GE5 / Orsay).